A 280-amino-acid polypeptide reads, in one-letter code: Beta-glucosyl-HMC-alpha-glucosyl-transferase (280 aa).

The protein operates within genetic information processing; DNA modification. In terms of biological role, transfers a gentiobiosyl-group on a hydroxymethylcytosine residue in DNA. Is involved in a DNA modification process to protects the phage genome against its own nucleases and the host restriction endonuclease system. This chain is Beta-glucosyl-HMC-alpha-glucosyl-transferase, found in Enterobacteria phage T6 (Bacteriophage T6).